The primary structure comprises 151 residues: Ubiquitin-conjugating enzyme E2 2 (151 aa).

The interval 1 to 26 is disordered; the sequence is MSTTARRRLMRDFKRMQQDPPQGVSA. Positions 4–150 constitute a UBC core domain; it reads TARRRLMRDF…VRDTVEASWT (147 aa). Catalysis depends on Cys88, which acts as the Glycyl thioester intermediate.

This sequence belongs to the ubiquitin-conjugating enzyme family.

Its subcellular location is the cytoplasm. The protein resides in the nucleus. The enzyme catalyses S-ubiquitinyl-[E1 ubiquitin-activating enzyme]-L-cysteine + [E2 ubiquitin-conjugating enzyme]-L-cysteine = [E1 ubiquitin-activating enzyme]-L-cysteine + S-ubiquitinyl-[E2 ubiquitin-conjugating enzyme]-L-cysteine.. The protein operates within protein modification; protein ubiquitination. In terms of biological role, catalyzes the covalent attachment of ubiquitin to other proteins. Plays a role in transcription regulation by catalyzing the monoubiquitination of histone H2B to form H2BK123ub1. H2BK123ub1 gives a specific tag for epigenetic transcriptional activation and is also a prerequisite for H3K4me and H3K79me formation. Also involved in postreplication repair of UV-damaged DNA, in N-end rule-dependent protein degradation and in sporulation. The protein is Ubiquitin-conjugating enzyme E2 2 (UBC2) of Yarrowia lipolytica (strain CLIB 122 / E 150) (Yeast).